Here is a 399-residue protein sequence, read N- to C-terminus: S-adenosylmethionine synthase (399 aa).

His15 provides a ligand contact to ATP. Asp17 contacts Mg(2+). A K(+)-binding site is contributed by Glu43. Residues Glu56 and Gln99 each coordinate L-methionine. The flexible loop stretch occupies residues 99–109 (QSADIAQGVDN). ATP is bound by residues 174–176 (DGK), 244–245 (RF), Asp253, 259–260 (RK), Ala276, and Lys280. Residue Asp253 participates in L-methionine binding. Lys284 is an L-methionine binding site.

It belongs to the AdoMet synthase family. As to quaternary structure, homotetramer; dimer of dimers. Mg(2+) serves as cofactor. The cofactor is K(+).

Its subcellular location is the cytoplasm. It carries out the reaction L-methionine + ATP + H2O = S-adenosyl-L-methionine + phosphate + diphosphate. It participates in amino-acid biosynthesis; S-adenosyl-L-methionine biosynthesis; S-adenosyl-L-methionine from L-methionine: step 1/1. Catalyzes the formation of S-adenosylmethionine (AdoMet) from methionine and ATP. The overall synthetic reaction is composed of two sequential steps, AdoMet formation and the subsequent tripolyphosphate hydrolysis which occurs prior to release of AdoMet from the enzyme. The chain is S-adenosylmethionine synthase from Salinispora tropica (strain ATCC BAA-916 / DSM 44818 / JCM 13857 / NBRC 105044 / CNB-440).